A 265-amino-acid chain; its full sequence is 6-carboxyhexanoate--CoA ligase (265 aa).

Belongs to the BioW family. As to quaternary structure, homodimer. The cofactor is Mg(2+).

The enzyme catalyses heptanedioate + ATP + CoA = 6-carboxyhexanoyl-CoA + AMP + diphosphate. It participates in metabolic intermediate metabolism; pimeloyl-CoA biosynthesis; pimeloyl-CoA from pimelate: step 1/1. Its function is as follows. Catalyzes the transformation of pimelate into pimeloyl-CoA with concomitant hydrolysis of ATP to AMP. The chain is 6-carboxyhexanoate--CoA ligase from Syntrophotalea carbinolica (strain DSM 2380 / NBRC 103641 / GraBd1) (Pelobacter carbinolicus).